The sequence spans 538 residues: Sterile alpha motif domain-containing protein 1 (538 aa).

Positions 1 to 11 (MAGPPALPPPE) are enriched in pro residues. 2 disordered regions span residues 1–30 (MAGPPALPPPETAAAATTAAAASSSAASPH) and 92–247 (SYRN…GAAR). Positions 12 to 29 (TAAAATTAAAASSSAASP) are enriched in low complexity. The SAMD1-like winged helix (WH) domain maps to 23-99 (SSSAASPHYQ…SISYRNAARV (77 aa)). At Thr-107 the chain carries Phosphothreonine. Low complexity predominate over residues 115–125 (PRGAPAAAAAA). Residues 126 to 139 (APPPTPAPPPPPAP) are compositionally biased toward pro residues. Over residues 140–158 (VAAAAPARAPRAAAAAATA) the composition is skewed to low complexity. At Ser-161 the chain carries Phosphoserine. The span at 168–177 (GPRAQRAAPL) shows a compositional bias: low complexity. Residues 178 to 236 (AAPPPAPAAPPAVAPPAGPRRAPPPAVAAREPPLPPPPQPPAPPQQQQPPPPQPQPPPE) show a composition bias toward pro residues. Residues 237 to 247 (GGAVRAGGAAR) show a composition bias toward low complexity. Ser-261 is subject to Phosphoserine. Basic and acidic residues predominate over residues 282-291 (AARGRLERTR). A disordered region spans residues 282–458 (AARGRLERTR…PPGRKEKPSD (177 aa)). A compositionally biased stretch (acidic residues) spans 328–351 (KEEEEDDDEDEDEEDDVSEGSEVP). Positions 425-436 (SPSPVPLPPGKP) are enriched in pro residues. The 69-residue stretch at 462 to 530 (WTVMDVVEYF…KVLQQGHFED (69 aa)) folds into the SAM domain.

As to quaternary structure, homopolymerize into a closed pentameric ring. Interacts (via SAM domain) with L3MBTL3 (via SAM domain); the interaction mediates L3MBTL3 binding to chromatin. Interacts (via WH domain) with KDM1A; the interaction modulates KDM1A function. As to expression, expressed in atherosclerotic lesions, not in normal intima. Expressed in foam cells.

The protein localises to the nucleus. It is found in the chromosome. The protein resides in the secreted. Unmethylated CpG islands (CGIs)-binding protein which localizes to H3K4me3-decorated CGIs, where it acts as a transcriptional repressor. Tethers L3MBTL3 to chromatin and interacts with the KDM1A histone demethylase complex to modulate H3K4me2 and H3K4me3 levels at CGIs. Plays a role in atherogenesis by binding with LDL on cell surface and promoting LDL oxidation which leads to the formation of foam cell. This is Sterile alpha motif domain-containing protein 1 from Homo sapiens (Human).